A 102-amino-acid chain; its full sequence is Small ribosomal subunit protein uS10 (102 aa).

It belongs to the universal ribosomal protein uS10 family. Part of the 30S ribosomal subunit.

Involved in the binding of tRNA to the ribosomes. This is Small ribosomal subunit protein uS10 from Streptococcus thermophilus (strain ATCC BAA-491 / LMD-9).